A 223-amino-acid chain; its full sequence is Thiamine-phosphate synthase (223 aa).

4-amino-2-methyl-5-(diphosphooxymethyl)pyrimidine is bound by residues 42–46 (QLRDK) and N83. Positions 84 and 103 each coordinate Mg(2+). S122 lines the 4-amino-2-methyl-5-(diphosphooxymethyl)pyrimidine pocket. A 2-[(2R,5Z)-2-carboxy-4-methylthiazol-5(2H)-ylidene]ethyl phosphate-binding site is contributed by 148 to 150 (TPT). K151 provides a ligand contact to 4-amino-2-methyl-5-(diphosphooxymethyl)pyrimidine. Residue G179 participates in 2-[(2R,5Z)-2-carboxy-4-methylthiazol-5(2H)-ylidene]ethyl phosphate binding.

The protein belongs to the thiamine-phosphate synthase family. Requires Mg(2+) as cofactor.

It catalyses the reaction 2-[(2R,5Z)-2-carboxy-4-methylthiazol-5(2H)-ylidene]ethyl phosphate + 4-amino-2-methyl-5-(diphosphooxymethyl)pyrimidine + 2 H(+) = thiamine phosphate + CO2 + diphosphate. The catalysed reaction is 2-(2-carboxy-4-methylthiazol-5-yl)ethyl phosphate + 4-amino-2-methyl-5-(diphosphooxymethyl)pyrimidine + 2 H(+) = thiamine phosphate + CO2 + diphosphate. The enzyme catalyses 4-methyl-5-(2-phosphooxyethyl)-thiazole + 4-amino-2-methyl-5-(diphosphooxymethyl)pyrimidine + H(+) = thiamine phosphate + diphosphate. Its pathway is cofactor biosynthesis; thiamine diphosphate biosynthesis; thiamine phosphate from 4-amino-2-methyl-5-diphosphomethylpyrimidine and 4-methyl-5-(2-phosphoethyl)-thiazole: step 1/1. In terms of biological role, condenses 4-methyl-5-(beta-hydroxyethyl)thiazole monophosphate (THZ-P) and 2-methyl-4-amino-5-hydroxymethyl pyrimidine pyrophosphate (HMP-PP) to form thiamine monophosphate (TMP). The protein is Thiamine-phosphate synthase of Mycobacterium avium (strain 104).